Reading from the N-terminus, the 142-residue chain is Lysozyme 2 (142 aa).

The first 20 residues, 1–20, serve as a signal peptide directing secretion; the sequence is MLKLTLTILAAVLLVTPAFG. Positions 21 to 142 constitute a C-type lysozyme domain; the sequence is KVYTRCSLAR…HTLPSIDDCF (122 aa). Intrachain disulfides connect C26-C141, C47-C131, C82-C98, and C94-C112. Residue E52 is part of the active site. N66 is a glycosylation site (N-linked (GlcNAc...) asparagine). The active site involves D70.

Belongs to the glycosyl hydrolase 22 family. Expressed only in the midgut where it is concentrated around the middle in all larval stages.

It localises to the secreted. It catalyses the reaction Hydrolysis of (1-&gt;4)-beta-linkages between N-acetylmuramic acid and N-acetyl-D-glucosamine residues in a peptidoglycan and between N-acetyl-D-glucosamine residues in chitodextrins.. In terms of biological role, lysozymes have primarily a bacteriolytic function. Shows antibacterial activity against Gram-positive bacterium M.luteus but shows no activity against Gram-negative bacterium E.coli. Likely to play a role in the eradication of ingested pathogens during their passage through the intestine. The sequence is that of Lysozyme 2 from Lucilia sericata (Green bottle fly).